An 887-amino-acid chain; its full sequence is DNA gyrase subunit A (887 aa).

One can recognise a Topo IIA-type catalytic domain in the interval 35–501 (LPDVRDGLKP…GFEDLEDEDL (467 aa)). Residue Tyr123 is the O-(5'-phospho-DNA)-tyrosine intermediate of the active site. A GyrA-box motif is present at residues 528-534 (QNRGGRG). The disordered stretch occupies residues 811–865 (KEDAEDETNEDEQSTSTVSEDGTEQQREAVVNDETPGNAIHTEVIDSEENDEDGR). Acidic residues predominate over residues 813 to 823 (DAEDETNEDEQ).

The protein belongs to the type II topoisomerase GyrA/ParC subunit family. In terms of assembly, heterotetramer, composed of two GyrA and two GyrB chains. In the heterotetramer, GyrA contains the active site tyrosine that forms a transient covalent intermediate with DNA, while GyrB binds cofactors and catalyzes ATP hydrolysis.

The protein localises to the cytoplasm. It carries out the reaction ATP-dependent breakage, passage and rejoining of double-stranded DNA.. In terms of biological role, a type II topoisomerase that negatively supercoils closed circular double-stranded (ds) DNA in an ATP-dependent manner to modulate DNA topology and maintain chromosomes in an underwound state. Negative supercoiling favors strand separation, and DNA replication, transcription, recombination and repair, all of which involve strand separation. Also able to catalyze the interconversion of other topological isomers of dsDNA rings, including catenanes and knotted rings. Type II topoisomerases break and join 2 DNA strands simultaneously in an ATP-dependent manner. In Staphylococcus aureus (strain MSSA476), this protein is DNA gyrase subunit A.